A 371-amino-acid chain; its full sequence is Queuine tRNA-ribosyltransferase (371 aa).

The Proton acceptor role is filled by D90. Residues 90 to 94 (DSGGF), D144, Q188, and G215 contribute to the substrate site. The RNA binding stretch occupies residues 246-252 (GVGTPED). The Nucleophile role is filled by D265. An RNA binding; important for wobble base 34 recognition region spans residues 270–274 (TRNAR). Zn(2+) contacts are provided by C303, C305, C308, and H334.

Belongs to the queuine tRNA-ribosyltransferase family. As to quaternary structure, homodimer. Within each dimer, one monomer is responsible for RNA recognition and catalysis, while the other monomer binds to the replacement base PreQ1. Zn(2+) is required as a cofactor.

The catalysed reaction is 7-aminomethyl-7-carbaguanine + guanosine(34) in tRNA = 7-aminomethyl-7-carbaguanosine(34) in tRNA + guanine. It functions in the pathway tRNA modification; tRNA-queuosine biosynthesis. In terms of biological role, catalyzes the base-exchange of a guanine (G) residue with the queuine precursor 7-aminomethyl-7-deazaguanine (PreQ1) at position 34 (anticodon wobble position) in tRNAs with GU(N) anticodons (tRNA-Asp, -Asn, -His and -Tyr). Catalysis occurs through a double-displacement mechanism. The nucleophile active site attacks the C1' of nucleotide 34 to detach the guanine base from the RNA, forming a covalent enzyme-RNA intermediate. The proton acceptor active site deprotonates the incoming PreQ1, allowing a nucleophilic attack on the C1' of the ribose to form the product. After dissociation, two additional enzymatic reactions on the tRNA convert PreQ1 to queuine (Q), resulting in the hypermodified nucleoside queuosine (7-(((4,5-cis-dihydroxy-2-cyclopenten-1-yl)amino)methyl)-7-deazaguanosine). This Neisseria meningitidis serogroup C (strain 053442) protein is Queuine tRNA-ribosyltransferase.